The primary structure comprises 264 residues: Glutamate racemase 2 (264 aa).

Residues 10–11 (DS) and 42–43 (YG) each bind substrate. The active-site Proton donor/acceptor is Cys-73. Position 74–75 (74–75 (NT)) interacts with substrate. Cys-181 acts as the Proton donor/acceptor in catalysis. 182-183 (TH) provides a ligand contact to substrate.

The protein belongs to the aspartate/glutamate racemases family.

The enzyme catalyses L-glutamate = D-glutamate. The protein operates within cell wall biogenesis; peptidoglycan biosynthesis. Functionally, provides the (R)-glutamate required for cell wall biosynthesis. The polypeptide is Glutamate racemase 2 (Caldanaerobacter subterraneus subsp. tengcongensis (strain DSM 15242 / JCM 11007 / NBRC 100824 / MB4) (Thermoanaerobacter tengcongensis)).